Consider the following 297-residue polypeptide: Calponin-1 (297 aa).

Positions 28–131 (HQREQELREW…STLLALASMA (104 aa)) constitute a Calponin-homology (CH) domain. 3 Calponin-like repeats span residues 164 to 189 (IGLQ…RHLY), 204 to 229 (ISLQ…RQIF), and 243 to 268 (VSLQ…RQVY). A Phosphothreonine; by ROCK2 modification is found at Thr-170. A Phosphoserine; by ROCK2 modification is found at Ser-175. Phosphothreonine; by ROCK2 is present on residues Thr-180 and Thr-184. Thr-259 carries the post-translational modification Phosphothreonine; by ROCK2.

The protein belongs to the calponin family. In terms of assembly, part of cGMP kinase signaling complex at least composed of ACTA2/alpha-actin, CNN1/calponin H1, PLN/phospholamban, PRKG1 and ITPR1.

Thin filament-associated protein that is implicated in the regulation and modulation of smooth muscle contraction. It is capable of binding to actin, calmodulin and tropomyosin. The interaction of calponin with actin inhibits the actomyosin Mg-ATPase activity. In Ovis aries (Sheep), this protein is Calponin-1 (CNN1).